The primary structure comprises 410 residues: 3-phosphoshikimate 1-carboxyvinyltransferase (410 aa).

Residues Lys20, Ser21, and Arg25 each contribute to the 3-phosphoshikimate site. A phosphoenolpyruvate-binding site is contributed by Lys20. Arg115 contributes to the phosphoenolpyruvate binding site. The 3-phosphoshikimate site is built by Ser157, Ser158, Gln159, Ser183, Asp293, and Lys320. Gln159 contributes to the phosphoenolpyruvate binding site. Asp293 functions as the Proton acceptor in the catalytic mechanism. 3 residues coordinate phosphoenolpyruvate: Arg324, Arg365, and Lys391.

It belongs to the EPSP synthase family. Monomer.

It localises to the cytoplasm. The enzyme catalyses 3-phosphoshikimate + phosphoenolpyruvate = 5-O-(1-carboxyvinyl)-3-phosphoshikimate + phosphate. It functions in the pathway metabolic intermediate biosynthesis; chorismate biosynthesis. Functionally, catalyzes the transfer of the enolpyruvyl moiety of phosphoenolpyruvate (PEP) to the 5-hydroxyl of shikimate-3-phosphate (S3P) to produce enolpyruvyl shikimate-3-phosphate and inorganic phosphate. The sequence is that of 3-phosphoshikimate 1-carboxyvinyltransferase from Thermoplasma acidophilum (strain ATCC 25905 / DSM 1728 / JCM 9062 / NBRC 15155 / AMRC-C165).